Consider the following 1399-residue polypeptide: FYVE, RhoGEF and PH domain-containing protein 6 (1399 aa).

6 disordered regions span residues 1 to 99, 138 to 164, 185 to 210, 235 to 281, 299 to 341, and 367 to 479; these read MTSA…KDVR, MKEN…SEKC, LTQQ…NGDH, AHHN…DGIS, YTSK…NGSS, and PVDE…KKPQ. Residues 50-60 are compositionally biased toward low complexity; it reads PAIAPKPKVPT. Basic and acidic residues predominate over residues 259-276; sequence AESRGHTDSCEPENKRVA. Over residues 307 to 321 the composition is skewed to basic residues; sequence KPRKTHAAARLRRQK. Polar residues-rich tracts occupy residues 332 to 341 and 377 to 402; these read EPGNSNNGSS and RALT…QQTP. The span at 403–418 shows a compositional bias: low complexity; it reads SLDTDSSLTSDSSGSG. Residues 428–453 are compositionally biased toward polar residues; that stretch reads TYTQCSTQPLSLPKQVTSACTDQPPA. Phosphoserine is present on residues S494, S531, and S583. The segment at 515–542 is disordered; it reads RNYLHHPGPPNHGASASPFDMPNPTSEK. Disordered regions lie at residues 631–650 and 657–678; these read QHGD…GLES and TGEE…SLES. S670 and S697 each carry phosphoserine. The segment at 768–840 is disordered; that stretch reads APDGQLQLDP…KQDEDAGMKS (73 aa). Residues 802 to 817 show a composition bias toward acidic residues; sequence PSDEEVINSSDEDDVS. Basic and acidic residues predominate over residues 821–838; the sequence is SKGEPDPLEDKQDEDAGM. Positions 841-1030 constitute a DH domain; the sequence is KVHHIAKEIM…IEVANHANDT (190 aa). Residues 1059-1153 form the PH 1 domain; that stretch reads VFLKEGTLMK…WLEAISSSIE (95 aa). Phosphoserine is present on S1167. The segment at 1191–1250 adopts an FYVE-type zinc-finger fold; sequence DTRATMCMICTSEFTLTWRRHHCRACGKIVCQACSSNKYGLDYLKGQLARVCEHCFQELQ. Zn(2+) contacts are provided by C1197, C1200, C1213, C1216, C1221, C1224, C1242, and C1245. A PH 2 domain is found at 1302–1398; it reads DSTMSGYLYR…WIDAFQEGTV (97 aa).

Its subcellular location is the cytoplasm. It localises to the cytoskeleton. May activate CDC42, a member of the Ras-like family of Rho- and Rac proteins, by exchanging bound GDP for free GTP. May play a role in regulating the actin cytoskeleton and cell shape. The polypeptide is FYVE, RhoGEF and PH domain-containing protein 6 (Fgd6) (Mus musculus (Mouse)).